We begin with the raw amino-acid sequence, 405 residues long: Argininosuccinate synthase (405 aa).

Residues 10-18 (AYSGGLDTS) and alanine 37 each bind ATP. Residues tyrosine 88 and serine 93 each contribute to the L-citrulline site. Glycine 118 lines the ATP pocket. L-aspartate contacts are provided by threonine 120, asparagine 124, and aspartate 125. Residue asparagine 124 participates in L-citrulline binding. 5 residues coordinate L-citrulline: arginine 128, serine 179, serine 188, glutamate 264, and tyrosine 276.

Belongs to the argininosuccinate synthase family. Type 1 subfamily. In terms of assembly, homotetramer.

It is found in the cytoplasm. It catalyses the reaction L-citrulline + L-aspartate + ATP = 2-(N(omega)-L-arginino)succinate + AMP + diphosphate + H(+). The protein operates within amino-acid biosynthesis; L-arginine biosynthesis; L-arginine from L-ornithine and carbamoyl phosphate: step 2/3. In Pseudomonas fluorescens (strain SBW25), this protein is Argininosuccinate synthase.